The chain runs to 459 residues: Transcriptional coactivator YAP1-A (459 aa).

Positions 1–13 (MEPGSQQQPSAPA) are enriched in low complexity. Residues 1-22 (MEPGSQQQPSAPAQQPPPVGHQ) form a disordered region. 4 positions are modified to phosphoserine; by LATS1 and LATS2: Ser-30, Ser-80, Ser-98, and Ser-134. Disordered stretches follow at residues 65 to 99 (FKQP…AHSS) and 126 to 145 (SAPH…PLPP). WW domains are found at residues 141–174 (VPLP…DPRK) and 199–232 (GPLP…DPRL). The tract at residues 246-268 (NAPVKAPPALPPPSPQTGVLGSG) is disordered. The span at 250-260 (KAPPALPPPSP) shows a compositional bias: pro residues. The tract at residues 261-459 (QTGVLGSGGN…LDKESFLTWL (199 aa)) is transactivation domain. Residues 269–297 (GNQQMRLQQLQMEKERLRLKHQELLRQVR) adopt a coiled-coil conformation. Residues 344-363 (GTYHSRDESTESGLSMSSYS) form a disordered region. Residues 354-363 (ESGLSMSSYS) show a composition bias toward polar residues.

This sequence belongs to the YAP1 family. Interacts with tead1. In terms of processing, phosphorylated by lats1 and lats2; leading to cytoplasmic translocation and inactivation.

It localises to the cytoplasm. It is found in the nucleus. The protein localises to the cell junction. Its subcellular location is the tight junction. The protein resides in the cell membrane. Functionally, transcriptional regulator which can act both as a coactivator and a corepressor and is the critical downstream regulatory target in the Hippo signaling pathway that plays a pivotal role in organ size control and tumor suppression by restricting proliferation and promoting apoptosis. Plays a key role in tissue tension and 3D tissue shape by regulating cortical actomyosin network formation. Required for expansion of the neural plate and neural plate border zone progenitor pools. Acts as a direct regulator of pax3 expression via interaction with tead1. The polypeptide is Transcriptional coactivator YAP1-A (Xenopus laevis (African clawed frog)).